Consider the following 209-residue polypeptide: ATP-dependent Clp protease proteolytic subunit (209 aa).

S103 functions as the Nucleophile in the catalytic mechanism. Residue H128 is part of the active site.

This sequence belongs to the peptidase S14 family. In terms of assembly, fourteen ClpP subunits assemble into 2 heptameric rings which stack back to back to give a disk-like structure with a central cavity, resembling the structure of eukaryotic proteasomes.

The protein resides in the cytoplasm. The catalysed reaction is Hydrolysis of proteins to small peptides in the presence of ATP and magnesium. alpha-casein is the usual test substrate. In the absence of ATP, only oligopeptides shorter than five residues are hydrolyzed (such as succinyl-Leu-Tyr-|-NHMec, and Leu-Tyr-Leu-|-Tyr-Trp, in which cleavage of the -Tyr-|-Leu- and -Tyr-|-Trp bonds also occurs).. Functionally, cleaves peptides in various proteins in a process that requires ATP hydrolysis. Has a chymotrypsin-like activity. Plays a major role in the degradation of misfolded proteins. The polypeptide is ATP-dependent Clp protease proteolytic subunit (Lawsonia intracellularis (strain PHE/MN1-00)).